A 171-amino-acid chain; its full sequence is Lipoprotein signal peptidase (171 aa).

The next 3 helical transmembrane spans lie at 12–32 (WYWV…WVLA), 67–87 (WQRW…TVWL), and 93–113 (SLLK…GNLV). Active-site residues include aspartate 123 and aspartate 141. The helical transmembrane segment at 137-157 (FNIADSAICIGAVLIIWDAFL) threads the bilayer.

Belongs to the peptidase A8 family.

The protein localises to the cell inner membrane. It carries out the reaction Release of signal peptides from bacterial membrane prolipoproteins. Hydrolyzes -Xaa-Yaa-Zaa-|-(S,diacylglyceryl)Cys-, in which Xaa is hydrophobic (preferably Leu), and Yaa (Ala or Ser) and Zaa (Gly or Ala) have small, neutral side chains.. Its pathway is protein modification; lipoprotein biosynthesis (signal peptide cleavage). Its function is as follows. This protein specifically catalyzes the removal of signal peptides from prolipoproteins. The polypeptide is Lipoprotein signal peptidase (Shewanella baltica (strain OS195)).